The following is a 146-amino-acid chain: Cytochrome c oxidase subunit 5A, mitochondrial (146 aa).

Residues Met1–Tyr37 constitute a mitochondrion transit peptide. Residues Leu2–Arg16 carry the SIFI-degron motif. N6-acetyllysine occurs at positions 83 and 109. Thr137 carries the post-translational modification Phosphothreonine.

In terms of assembly, component of the cytochrome c oxidase (complex IV, CIV), a multisubunit enzyme composed of 14 subunits. The complex is composed of a catalytic core of 3 subunits MT-CO1, MT-CO2 and MT-CO3, encoded in the mitochondrial DNA, and 11 supernumerary subunits COX4I, COX5A, COX5B, COX6A, COX6B, COX6C, COX7A, COX7B, COX7C, COX8 and NDUFA4, which are encoded in the nuclear genome. The complex exists as a monomer or a dimer and forms supercomplexes (SCs) in the inner mitochondrial membrane with NADH-ubiquinone oxidoreductase (complex I, CI) and ubiquinol-cytochrome c oxidoreductase (cytochrome b-c1 complex, complex III, CIII), resulting in different assemblies (supercomplex SCI(1)III(2)IV(1) and megacomplex MCI(2)III(2)IV(2)). Interacts with AFG1L. Interacts with RAB5IF. In response to mitochondrial stress, the precursor protein is ubiquitinated by the SIFI complex in the cytoplasm before mitochondrial import, leading to its degradation. Within the SIFI complex, UBR4 initiates ubiquitin chain that are further elongated or branched by KCMF1. Expressed in the head of epididymal sperm but not in testicular sperm (at protein level).

It localises to the mitochondrion inner membrane. It participates in energy metabolism; oxidative phosphorylation. Its function is as follows. Component of the cytochrome c oxidase, the last enzyme in the mitochondrial electron transport chain which drives oxidative phosphorylation. The respiratory chain contains 3 multisubunit complexes succinate dehydrogenase (complex II, CII), ubiquinol-cytochrome c oxidoreductase (cytochrome b-c1 complex, complex III, CIII) and cytochrome c oxidase (complex IV, CIV), that cooperate to transfer electrons derived from NADH and succinate to molecular oxygen, creating an electrochemical gradient over the inner membrane that drives transmembrane transport and the ATP synthase. Cytochrome c oxidase is the component of the respiratory chain that catalyzes the reduction of oxygen to water. Electrons originating from reduced cytochrome c in the intermembrane space (IMS) are transferred via the dinuclear copper A center (CU(A)) of subunit 2 and heme A of subunit 1 to the active site in subunit 1, a binuclear center (BNC) formed by heme A3 and copper B (CU(B)). The BNC reduces molecular oxygen to 2 water molecules using 4 electrons from cytochrome c in the IMS and 4 protons from the mitochondrial matrix. The protein is Cytochrome c oxidase subunit 5A, mitochondrial (Cox5a) of Rattus norvegicus (Rat).